The sequence spans 504 residues: Cytoplasmic dynein 1 light intermediate chain 1 (504 aa).

Position 35 to 42 (35 to 42 (GDPTSGKS)) interacts with ATP. Composition is skewed to low complexity over residues 167–189 (TTTA…TNKT), 392–425 (NSPS…NTPL), and 437–446 (SSNNPVAASP). Disordered regions lie at residues 167–195 (TTTA…TTDK), 383–446 (LDND…AASP), and 464–504 (DKTS…QQKK). The span at 464–473 (DKTSSRKDLK) shows a compositional bias: basic and acidic residues. Residues 475 to 487 (SLASPPTTSVSSN) show a composition bias toward polar residues. The span at 488–504 (AREDAKKELDKLKQQKK) shows a compositional bias: basic and acidic residues.

This sequence belongs to the dynein light intermediate chain family. In terms of assembly, homodimer. The cytoplasmic dynein 1 complex consists of two catalytic heavy chains (HCs) and a number of non-catalytic subunits presented by intermediate chains (ICs), light intermediate chains (LICs) and light chains (LCs).

It is found in the cytoplasm. Its subcellular location is the cytoskeleton. Its function is as follows. Acts as one of several non-catalytic accessory components of the cytoplasmic dynein 1 complex that are thought to be involved in linking dynein to cargos and to adapter proteins that regulate dynein function. Cytoplasmic dynein 1 acts as a motor for the intracellular retrograde motility of vesicles and organelles along microtubules. May play a role in binding dynein to membranous organelles or chromosomes. In Dictyostelium discoideum (Social amoeba), this protein is Cytoplasmic dynein 1 light intermediate chain 1 (dync1li1).